Here is a 120-residue protein sequence, read N- to C-terminus: uncharacterized protein (120 aa).

The N-terminal stretch at 1–27 is a signal peptide; the sequence is MPKIGVSLIVLIMLIIFLAGCNKNEQN.

This is an uncharacterized protein from Bacillus subtilis (strain 168).